The sequence spans 132 residues: Small ribosomal subunit protein uS8 (132 aa).

The protein belongs to the universal ribosomal protein uS8 family. Part of the 30S ribosomal subunit. Contacts proteins S5 and S12.

Its function is as follows. One of the primary rRNA binding proteins, it binds directly to 16S rRNA central domain where it helps coordinate assembly of the platform of the 30S subunit. This is Small ribosomal subunit protein uS8 from Streptococcus thermophilus (strain CNRZ 1066).